Consider the following 485-residue polypeptide: Glycogen synthase (485 aa).

Lys-15 is an ADP-alpha-D-glucose binding site.

This sequence belongs to the glycosyltransferase 1 family. Bacterial/plant glycogen synthase subfamily.

The catalysed reaction is [(1-&gt;4)-alpha-D-glucosyl](n) + ADP-alpha-D-glucose = [(1-&gt;4)-alpha-D-glucosyl](n+1) + ADP + H(+). Its pathway is glycan biosynthesis; glycogen biosynthesis. Synthesizes alpha-1,4-glucan chains using ADP-glucose. In Geobacillus thermodenitrificans (strain NG80-2), this protein is Glycogen synthase.